The primary structure comprises 183 residues: Adenine phosphoribosyltransferase (183 aa).

It belongs to the purine/pyrimidine phosphoribosyltransferase family. In terms of assembly, homodimer.

The protein localises to the cytoplasm. It carries out the reaction AMP + diphosphate = 5-phospho-alpha-D-ribose 1-diphosphate + adenine. It participates in purine metabolism; AMP biosynthesis via salvage pathway; AMP from adenine: step 1/1. In terms of biological role, catalyzes a salvage reaction resulting in the formation of AMP, that is energically less costly than de novo synthesis. In Escherichia coli O157:H7, this protein is Adenine phosphoribosyltransferase.